The chain runs to 282 residues: HMG box-containing protein R545 (282 aa).

The disordered stretch occupies residues 1-282 (MPKKTATKAN…KKEASDEESD (282 aa)). Acidic residues predominate over residues 16 to 29 (DSENDSVVSEEEDN). Residues 70 to 87 (KGKVNAKKAPAKKAPVKK) are compositionally biased toward basic residues. Residues 93–121 (DSDNEEDEASEDGSDDEEDVVSADDSDSD) show a composition bias toward acidic residues. The span at 127–153 (KAAKKAPAKKAPAKKAPAKKAPAKKGK) shows a compositional bias: basic residues. Basic and acidic residues-rich tracts occupy residues 176-187 (TKKDGDKPKKPL) and 197-214 (RMPE…KEYM). Positions 183–252 (PKKPLSDYQK…KAPAKGGSKS (70 aa)) form a DNA-binding region, HMG box. A compositionally biased stretch (basic residues) spans 253–273 (TAKKAPAKKAPAKKAPAKKSK).

This chain is HMG box-containing protein R545, found in Acanthamoeba polyphaga mimivirus (APMV).